A 347-amino-acid polypeptide reads, in one-letter code: RNA 3'-terminal phosphate cyclase (347 aa).

ATP is bound by residues Gln101 and 286–289; that span reads HMAD. The Tele-AMP-histidine intermediate role is filled by His312.

This sequence belongs to the RNA 3'-terminal cyclase family. Type 1 subfamily.

It is found in the cytoplasm. The enzyme catalyses a 3'-end 3'-phospho-ribonucleotide-RNA + ATP = a 3'-end 2',3'-cyclophospho-ribonucleotide-RNA + AMP + diphosphate. Functionally, catalyzes the conversion of 3'-phosphate to a 2',3'-cyclic phosphodiester at the end of RNA. The mechanism of action of the enzyme occurs in 3 steps: (A) adenylation of the enzyme by ATP; (B) transfer of adenylate to an RNA-N3'P to produce RNA-N3'PP5'A; (C) and attack of the adjacent 2'-hydroxyl on the 3'-phosphorus in the diester linkage to produce the cyclic end product. The biological role of this enzyme is unknown but it is likely to function in some aspects of cellular RNA processing. This chain is RNA 3'-terminal phosphate cyclase, found in Pyrobaculum neutrophilum (strain DSM 2338 / JCM 9278 / NBRC 100436 / V24Sta) (Thermoproteus neutrophilus).